The primary structure comprises 206 residues: Imidazoleglycerol-phosphate dehydratase (206 aa).

It belongs to the imidazoleglycerol-phosphate dehydratase family.

The protein resides in the cytoplasm. The catalysed reaction is D-erythro-1-(imidazol-4-yl)glycerol 3-phosphate = 3-(imidazol-4-yl)-2-oxopropyl phosphate + H2O. The protein operates within amino-acid biosynthesis; L-histidine biosynthesis; L-histidine from 5-phospho-alpha-D-ribose 1-diphosphate: step 6/9. The protein is Imidazoleglycerol-phosphate dehydratase of Leptospira interrogans serogroup Icterohaemorrhagiae serovar copenhageni (strain Fiocruz L1-130).